We begin with the raw amino-acid sequence, 101 residues long: MADFLKGLPVYNESNFSRFHADSVCKASNRRPSVYLPTREYPSDQIIVTEKTNILLRYLHQQWDKKNAAKKRDQDQLEIGETSAPPRKIARTDSQEMSEDT.

Positions 67-101 are disordered; the sequence is NAAKKRDQDQLEIGETSAPPRKIARTDSQEMSEDT.

This sequence belongs to the DDA1 family. In terms of assembly, component of numerous DCX (DDB1-CUL4-X-box) E3 ubiquitin-protein ligase complexes which consist of a core of DDB1, cullin-4 (CUL4A or CUL4B), DDA1 and RBX1.

It participates in protein modification; protein ubiquitination. Functionally, functions as a component of numerous distinct DCX (DDB1-CUL4-X-box) E3 ubiquitin-protein ligase complexes which mediate the ubiquitination and subsequent proteasomal degradation of target proteins. In the DCX complexes, acts as a scaffolding subunit required to stabilize the complex. The polypeptide is DET1- and DDB1-associated protein 1 (Xenopus tropicalis (Western clawed frog)).